The chain runs to 220 residues: MVTIVTCADRRGAFPGASPDVPARVWRFLAEQSRALTASRLGTTVVVFDRALVKTAAGCTSTSTSTPAAGWLLSTQRPWPAPGGAGLARHRQPAERVSVVGGYNLLNSGRAGARPFHMWVFGAADLYAPIFAHIAATTRLVYAQLDCTFAGAAWRLPRRGPAIASPWPPYDTPALPELVAGGVLLRLVYEVVDRGAAPRPAKREPPCPGGLPPGAPCAIL.

Belongs to the herpesviridae US2 family.

This chain is Protein US2 homolog, found in Bovine herpesvirus 1.2 (strain ST) (BoHV-1).